A 110-amino-acid polypeptide reads, in one-letter code: UPF0122 protein BPUM_1495 (110 aa).

It belongs to the UPF0122 family.

Its function is as follows. Might take part in the signal recognition particle (SRP) pathway. This is inferred from the conservation of its genetic proximity to ftsY/ffh. May be a regulatory protein. This is UPF0122 protein BPUM_1495 from Bacillus pumilus (strain SAFR-032).